Consider the following 502-residue polypeptide: Packaging protein 1 (502 aa).

The disordered stretch occupies residues 99 to 122; the sequence is EAMEGQNPTCSRHESAYPIQSQVS. Position 226–233 (226–233) interacts with ATP; the sequence is GPTGCGKS. Positions 495 to 502 are DNA-binding; the sequence is RYYHSKKK.

This sequence belongs to the adenoviridae packaging protein 1 family. In terms of assembly, homodimer. Part of a genome packaging complex composed of packaging proteins 1, 2 and 3; this complex specifically binds to the packaging sequence on the left end of viral genomic DNA and performs packaging of the viral genome. Interacts with protein 33K.

Its subcellular location is the virion. It is found in the host nucleus. It localises to the host nucleoplasm. The protein localises to the host nucleolus. In terms of biological role, component of the packaging machinery which encapsidates the viral DNA into preformed capsids and transcriptional activator of the viral major late promoter (MLP). Binds, along with packaging proteins 2 and 3, to the specific packaging sequence on the left end of viral genomic DNA and displays ATPase activity thereby providing the power stroke of the packaging machinery. The activity of packaging protein IVa2 is stimulated by protein 33K which acts as a terminase. May be the protein that pumps DNA into the capsid powered by ATP hydrolysis. Specifically binds to the 5'-CG-3' nucleotides of the repeats making up the packaging sequence. Component of the DEF-A and DEF-B transcription factors that bind downstream elements of the major late promoter (MLP), and stimulate transcription from the MLP after initiation of viral DNA replication. DEF-A is a heterodimer packaging proteins 1 and 2 and DEF-B is a homodimer of packaging protein 1. The polypeptide is Packaging protein 1 (Canis lupus familiaris (Dog)).